The following is a 414-amino-acid chain: Serine hydroxymethyltransferase (414 aa).

Residues L116 and 120-122 contribute to the (6S)-5,6,7,8-tetrahydrofolate site; that span reads GHL. K224 carries the N6-(pyridoxal phosphate)lysine modification. (6S)-5,6,7,8-tetrahydrofolate is bound by residues E240 and 348 to 350; that span reads SPF.

Belongs to the SHMT family. Homodimer. Pyridoxal 5'-phosphate serves as cofactor.

Its subcellular location is the cytoplasm. It catalyses the reaction (6R)-5,10-methylene-5,6,7,8-tetrahydrofolate + glycine + H2O = (6S)-5,6,7,8-tetrahydrofolate + L-serine. The protein operates within one-carbon metabolism; tetrahydrofolate interconversion. It participates in amino-acid biosynthesis; glycine biosynthesis; glycine from L-serine: step 1/1. Its function is as follows. Catalyzes the reversible interconversion of serine and glycine with tetrahydrofolate (THF) serving as the one-carbon carrier. This reaction serves as the major source of one-carbon groups required for the biosynthesis of purines, thymidylate, methionine, and other important biomolecules. Also exhibits THF-independent aldolase activity toward beta-hydroxyamino acids, producing glycine and aldehydes, via a retro-aldol mechanism. In Campylobacter jejuni (strain RM1221), this protein is Serine hydroxymethyltransferase.